A 549-amino-acid polypeptide reads, in one-letter code: Oxygen-dependent choline dehydrogenase (549 aa).

4–33 (DFVIIGSGSAGSALAYRLSEDGKNSVLVIE) serves as a coordination point for FAD. His-465 functions as the Proton acceptor in the catalytic mechanism.

It belongs to the GMC oxidoreductase family. Requires FAD as cofactor.

It carries out the reaction choline + A = betaine aldehyde + AH2. The catalysed reaction is betaine aldehyde + NAD(+) + H2O = glycine betaine + NADH + 2 H(+). It participates in amine and polyamine biosynthesis; betaine biosynthesis via choline pathway; betaine aldehyde from choline (cytochrome c reductase route): step 1/1. In terms of biological role, involved in the biosynthesis of the osmoprotectant glycine betaine. Catalyzes the oxidation of choline to betaine aldehyde and betaine aldehyde to glycine betaine at the same rate. This chain is Oxygen-dependent choline dehydrogenase, found in Rhizobium etli (strain CIAT 652).